Here is a 115-residue protein sequence, read N- to C-terminus: DNA repair protein homolog YozK (115 aa).

The 104-residue stretch at 12-115 (ILCVDMKSFY…EKCVHTYSID (104 aa)) folds into the UmuC domain. Mg(2+) is bound by residues aspartate 16 and aspartate 115.

This sequence belongs to the DNA polymerase type-Y family. It depends on Mg(2+) as a cofactor.

This is DNA repair protein homolog YozK (yozK) from Bacillus subtilis (strain 168).